Consider the following 466-residue polypeptide: Glucose-6-phosphate 1-dehydrogenase 1 (466 aa).

NADP(+) is bound by residues Ser48, 88–89, and Lys141; that span reads DV. 4 residues coordinate substrate: His171, Lys175, Glu209, and Asp228. The Proton acceptor role is filled by His233. Lys319 and Lys324 together coordinate substrate.

This sequence belongs to the glucose-6-phosphate dehydrogenase family.

It catalyses the reaction D-glucose 6-phosphate + NADP(+) = 6-phospho-D-glucono-1,5-lactone + NADPH + H(+). It participates in carbohydrate degradation; pentose phosphate pathway; D-ribulose 5-phosphate from D-glucose 6-phosphate (oxidative stage): step 1/3. Its function is as follows. Catalyzes the oxidation of glucose 6-phosphate to 6-phosphogluconolactone. The polypeptide is Glucose-6-phosphate 1-dehydrogenase 1 (Mycobacterium tuberculosis (strain CDC 1551 / Oshkosh)).